An 83-amino-acid chain; its full sequence is MSDKIRLLEGKVSSVAMDKTVVVRAERYVKHPLYGKFVKKTTKYYVHDEKNECKEGDVIKFKETRPYSKTKKWCLVDIINREK.

Belongs to the universal ribosomal protein uS17 family. Part of the 30S ribosomal subunit.

Its function is as follows. One of the primary rRNA binding proteins, it binds specifically to the 5'-end of 16S ribosomal RNA. The polypeptide is Small ribosomal subunit protein uS17 (Francisella philomiragia subsp. philomiragia (strain ATCC 25017 / CCUG 19701 / FSC 153 / O#319-036)).